Here is a 357-residue protein sequence, read N- to C-terminus: Heat-inducible transcription repressor HrcA (357 aa).

This sequence belongs to the HrcA family.

Functionally, negative regulator of class I heat shock genes (grpE-dnaK-dnaJ and groELS operons). Prevents heat-shock induction of these operons. The protein is Heat-inducible transcription repressor HrcA of Anabaena sp. (strain L31).